Reading from the N-terminus, the 215-residue chain is Thiamine-phosphate synthase (215 aa).

4-amino-2-methyl-5-(diphosphooxymethyl)pyrimidine contacts are provided by residues glutamine 37–lysine 41 and asparagine 69. Aspartate 70 and aspartate 89 together coordinate Mg(2+). 4-amino-2-methyl-5-(diphosphooxymethyl)pyrimidine is bound at residue serine 108. Threonine 134–threonine 136 is a 2-[(2R,5Z)-2-carboxy-4-methylthiazol-5(2H)-ylidene]ethyl phosphate binding site. Lysine 137 contacts 4-amino-2-methyl-5-(diphosphooxymethyl)pyrimidine. 2-[(2R,5Z)-2-carboxy-4-methylthiazol-5(2H)-ylidene]ethyl phosphate is bound by residues glycine 166 and valine 186–serine 187.

The protein belongs to the thiamine-phosphate synthase family. Requires Mg(2+) as cofactor.

The enzyme catalyses 2-[(2R,5Z)-2-carboxy-4-methylthiazol-5(2H)-ylidene]ethyl phosphate + 4-amino-2-methyl-5-(diphosphooxymethyl)pyrimidine + 2 H(+) = thiamine phosphate + CO2 + diphosphate. It catalyses the reaction 2-(2-carboxy-4-methylthiazol-5-yl)ethyl phosphate + 4-amino-2-methyl-5-(diphosphooxymethyl)pyrimidine + 2 H(+) = thiamine phosphate + CO2 + diphosphate. It carries out the reaction 4-methyl-5-(2-phosphooxyethyl)-thiazole + 4-amino-2-methyl-5-(diphosphooxymethyl)pyrimidine + H(+) = thiamine phosphate + diphosphate. The protein operates within cofactor biosynthesis; thiamine diphosphate biosynthesis; thiamine phosphate from 4-amino-2-methyl-5-diphosphomethylpyrimidine and 4-methyl-5-(2-phosphoethyl)-thiazole: step 1/1. Condenses 4-methyl-5-(beta-hydroxyethyl)thiazole monophosphate (THZ-P) and 2-methyl-4-amino-5-hydroxymethyl pyrimidine pyrophosphate (HMP-PP) to form thiamine monophosphate (TMP). This Yersinia pseudotuberculosis serotype I (strain IP32953) protein is Thiamine-phosphate synthase.